A 590-amino-acid polypeptide reads, in one-letter code: Aspartate--tRNA(Asp/Asn) ligase (590 aa).

Residue glutamate 182 coordinates L-aspartate. The tract at residues 206 to 209 (QLFK) is aspartate. Arginine 228 lines the L-aspartate pocket. Residues 228-230 (RDE) and glutamine 237 contribute to the ATP site. Residue histidine 454 coordinates L-aspartate. An ATP-binding site is contributed by glutamate 488. Residue arginine 495 coordinates L-aspartate. 540–543 (GLDR) is an ATP binding site.

Belongs to the class-II aminoacyl-tRNA synthetase family. Type 1 subfamily. In terms of assembly, homodimer.

It localises to the cytoplasm. It carries out the reaction tRNA(Asx) + L-aspartate + ATP = L-aspartyl-tRNA(Asx) + AMP + diphosphate. Aspartyl-tRNA synthetase with relaxed tRNA specificity since it is able to aspartylate not only its cognate tRNA(Asp) but also tRNA(Asn). Reaction proceeds in two steps: L-aspartate is first activated by ATP to form Asp-AMP and then transferred to the acceptor end of tRNA(Asp/Asn). This Halothermothrix orenii (strain H 168 / OCM 544 / DSM 9562) protein is Aspartate--tRNA(Asp/Asn) ligase.